Consider the following 489-residue polypeptide: N-succinylglutamate 5-semialdehyde dehydrogenase (489 aa).

Glycine 216 to glycine 221 serves as a coordination point for NAD(+). Active-site residues include glutamate 239 and cysteine 273.

This sequence belongs to the aldehyde dehydrogenase family. AstD subfamily.

It catalyses the reaction N-succinyl-L-glutamate 5-semialdehyde + NAD(+) + H2O = N-succinyl-L-glutamate + NADH + 2 H(+). It functions in the pathway amino-acid degradation; L-arginine degradation via AST pathway; L-glutamate and succinate from L-arginine: step 4/5. In terms of biological role, catalyzes the NAD-dependent reduction of succinylglutamate semialdehyde into succinylglutamate. The chain is N-succinylglutamate 5-semialdehyde dehydrogenase from Erwinia tasmaniensis (strain DSM 17950 / CFBP 7177 / CIP 109463 / NCPPB 4357 / Et1/99).